Here is a 166-residue protein sequence, read N- to C-terminus: 3-hydroxyacyl-[acyl-carrier-protein] dehydratase, mitochondrial (166 aa).

A mitochondrion-targeting transit peptide spans 1 to 17 (MLAKTVFPRGLLVLRSF). One can recognise a MaoC-like domain in the interval 34-125 (ETRVFSSEDI…VQAIALRETK (92 aa)).

As to quaternary structure, homodimer. Expressed in leaves, roots, siliques and flowers.

The protein localises to the mitochondrion. It carries out the reaction a (3R)-hydroxyacyl-[ACP] = a (2E)-enoyl-[ACP] + H2O. The catalysed reaction is (3R)-hydroxyhexadecanoyl-[ACP] = (2E)-hexadecenoyl-[ACP] + H2O. The enzyme catalyses (3R)-hydroxydecanoyl-[ACP] = (2E)-decenoyl-[ACP] + H2O. Its pathway is lipid metabolism; fatty acid biosynthesis. 3-hydroxyl-[acyl-carrier-protein] (3-hydroxyl-ACP) dehydratase required for mitochondrial fatty acid synthesis (mtFAS). MtFAS are essential for photorespiration and plant development, probably by influencing mitochondrial membrane lipid composition and other lipid metabolic pathways. This chain is 3-hydroxyacyl-[acyl-carrier-protein] dehydratase, mitochondrial, found in Arabidopsis thaliana (Mouse-ear cress).